Here is a 129-residue protein sequence, read N- to C-terminus: Small ribosomal subunit protein uS9 (129 aa).

Belongs to the universal ribosomal protein uS9 family.

This Treponema pallidum (strain Nichols) protein is Small ribosomal subunit protein uS9 (rpsI).